A 209-amino-acid polypeptide reads, in one-letter code: Large ribosomal subunit protein uL3 (209 aa).

Residues 132–153 (ATHGNSLSHRVPGSIGQNQTPG) form a disordered region. An N5-methylglutamine modification is found at Q150.

It belongs to the universal ribosomal protein uL3 family. Part of the 50S ribosomal subunit. Forms a cluster with proteins L14 and L19. In terms of processing, methylated by PrmB.

In terms of biological role, one of the primary rRNA binding proteins, it binds directly near the 3'-end of the 23S rRNA, where it nucleates assembly of the 50S subunit. The polypeptide is Large ribosomal subunit protein uL3 (Enterobacter sp. (strain 638)).